The following is a 403-amino-acid chain: Vitamin D(3) 25-hydroxylase (403 aa).

Heme is bound at residue C347.

Belongs to the cytochrome P450 family. It depends on heme as a cofactor.

It is found in the cytoplasm. The catalysed reaction is 5beta-cholestane-3alpha,7alpha,12alpha-triol + 6 reduced [adrenodoxin] + 3 O2 + 5 H(+) = (25R)-3alpha,7alpha,12alpha-trihydroxy-5beta-cholestan-26-oate + 6 oxidized [adrenodoxin] + 4 H2O. Activated by partially methylated beta-cyclodextrin. Hydroxylates vitamin D(3) into 25-hydroxyvitamin D(3) and 1-alpha,25-dihydroxyvitamin D(3), its physiologically active forms. It first hydroxylates the C-25 position of vitamin D(3) to form 25-hydroxyvitamin D(3), then subsequently hydroxylates the C-1-alpha position to form 1-alpha,25-dihydroxyvitamin D(3). Also displays 25-hydroxylase activity on vitamin D(2) and 7-dehydrocholesterol. May play a role in the biosynthesis of steroid metabolic intermediates. The chain is Vitamin D(3) 25-hydroxylase from Pseudonocardia autotrophica (Amycolata autotrophica).